The following is a 1009-amino-acid chain: Helicase-like transcription factor (1009 aa).

Omega-N-methylarginine is present on arginine 27. The DNA-binding element occupies 38 to 287 (EFQDVIPPDD…FSEKDRPENV (250 aa)). Lysine 112 participates in a covalent cross-link: Glycyl lysine isopeptide (Lys-Gly) (interchain with G-Cter in SUMO2). Tyrosine 195 carries the phosphotyrosine; by JAK2 modification. A Glycyl lysine isopeptide (Lys-Gly) (interchain with G-Cter in SUMO2) cross-link involves residue lysine 211. 294–301 (DDMGLGKT) is a binding site for ATP. The segment at 336 to 365 (DDSMKLGGNNTSEKADGLSKDASRCSEQPS) is disordered. The span at 348 to 359 (EKADGLSKDASR) shows a compositional bias: basic and acidic residues. Residues serine 397, serine 398, and serine 400 each carry the phosphoserine modification. One can recognise a Helicase ATP-binding domain in the interval 435–606 (IEDVAFACAL…WSLLSFLKLK (172 aa)). A DEGH box motif is present at residues 557–560 (DEGH). The residue at position 736 (threonine 736) is a Phosphothreonine. An RING-type zinc finger spans residues 760–801 (CAICLDSLTVPVITHCAHVFCKPCICQVIQNEQPHAKCPLCR). Residues 837–996 (ALMHALTDLR…TKKPNADEMK (160 aa)) form the Helicase C-terminal domain. Residues 925–1009 (SRVFLMDPAW…INEIRTLIDL (85 aa)) form an interaction with SP1 and SP3 region.

Belongs to the SNF2/RAD54 helicase family. RAD16 subfamily. Interacts with SP1 and SP3 independently of DNA; the interaction with these transcriptional factors may be required for basal transcription of target genes. Interacts with EGR1; the interaction requires prior binding to DNA and represses c-Rel via a DNA looping mechanism. Interacts with GATA4. Interacts with PCNA; the interaction promotes polyubiquitination of PCNA through association with the UBE2B-RAD18 and UBE2V2-UBE2N ubiquitin ligase complexes. Interacts with RAD18, SHPRH, UBE2V2 and UBE2N. In terms of tissue distribution, expressed in brain, heart, kidney, liver, lung, pancreas, placenta and skeletal muscle.

The protein localises to the cytoplasm. It is found in the nucleus. It localises to the nucleolus. The protein resides in the nucleoplasm. It carries out the reaction S-ubiquitinyl-[E2 ubiquitin-conjugating enzyme]-L-cysteine + [acceptor protein]-L-lysine = [E2 ubiquitin-conjugating enzyme]-L-cysteine + N(6)-ubiquitinyl-[acceptor protein]-L-lysine.. Its pathway is protein modification; protein ubiquitination. Has both helicase and E3 ubiquitin ligase activities. Possesses intrinsic ATP-dependent nucleosome-remodeling activity; This activity may be required for transcriptional activation or repression of specific target promoters. These may include the SERPINE1 and HIV-1 promoters and the SV40 enhancer, to which this protein can bind directly. Plays a role in error-free postreplication repair (PRR) of damaged DNA and maintains genomic stability through acting as a ubiquitin ligase for 'Lys-63'-linked polyubiquitination of chromatin-bound PCNA. The chain is Helicase-like transcription factor (HLTF) from Homo sapiens (Human).